The sequence spans 598 residues: Elongation factor 4 (598 aa).

A tr-type G domain is found at 4–186; that stretch reads SHIRNFSIIA…VIVNKIPPPE (183 aa). GTP contacts are provided by residues 16-21 and 133-136; these read DHGKST and NKID.

Belongs to the TRAFAC class translation factor GTPase superfamily. Classic translation factor GTPase family. LepA subfamily.

The protein localises to the cell inner membrane. It catalyses the reaction GTP + H2O = GDP + phosphate + H(+). Required for accurate and efficient protein synthesis under certain stress conditions. May act as a fidelity factor of the translation reaction, by catalyzing a one-codon backward translocation of tRNAs on improperly translocated ribosomes. Back-translocation proceeds from a post-translocation (POST) complex to a pre-translocation (PRE) complex, thus giving elongation factor G a second chance to translocate the tRNAs correctly. Binds to ribosomes in a GTP-dependent manner. The protein is Elongation factor 4 of Alteromonas mediterranea (strain DSM 17117 / CIP 110805 / LMG 28347 / Deep ecotype).